The following is a 151-amino-acid chain: Phosphopantetheine adenylyltransferase (151 aa).

Ser-9 lines the substrate pocket. ATP is bound by residues 9-10 (SF) and His-17. Residues Lys-41, Thr-73, and Arg-87 each contribute to the substrate site. ATP-binding positions include 88–90 (GLR), Glu-98, and 122–128 (TSFISSS).

It belongs to the bacterial CoaD family. Homohexamer. Requires Mg(2+) as cofactor.

It localises to the cytoplasm. The enzyme catalyses (R)-4'-phosphopantetheine + ATP + H(+) = 3'-dephospho-CoA + diphosphate. It participates in cofactor biosynthesis; coenzyme A biosynthesis; CoA from (R)-pantothenate: step 4/5. In terms of biological role, reversibly transfers an adenylyl group from ATP to 4'-phosphopantetheine, yielding dephospho-CoA (dPCoA) and pyrophosphate. The chain is Phosphopantetheine adenylyltransferase from Flavobacterium psychrophilum (strain ATCC 49511 / DSM 21280 / CIP 103535 / JIP02/86).